The chain runs to 88 residues: Sigma-conotoxin GVIIIA (88 aa).

Residues 1-20 (MMSKMGAMFVLLLLFTLASS) form the signal peptide. Residues 21–46 (LQEGDVQARKTRLKSDFYRALARDDR) constitute a propeptide that is removed on maturation. Position 55 is a 4-hydroxyproline (Pro-55). Trp-80 bears the 6'-bromotryptophan mark. Residue Ser-87 is modified to Serine amide.

It belongs to the conotoxin S superfamily. In terms of processing, contains 5 disulfide bonds. As to expression, expressed by the venom duct.

It localises to the secreted. Sigma-conotoxins bind and inhibit serotonin-gated ion channels. This peptide selectively and reversibly inhibits 5-hydroxytryptamine 3 receptor (HTR3A) through competitive antagonism (IC(50)=53-86.8 nM). The protein is Sigma-conotoxin GVIIIA of Conus geographus (Geography cone).